The following is a 106-amino-acid chain: Large ribosomal subunit protein bL21 (106 aa).

It belongs to the bacterial ribosomal protein bL21 family. As to quaternary structure, part of the 50S ribosomal subunit. Contacts protein L20.

In terms of biological role, this protein binds to 23S rRNA in the presence of protein L20. The sequence is that of Large ribosomal subunit protein bL21 from Xylella fastidiosa (strain Temecula1 / ATCC 700964).